Here is a 577-residue protein sequence, read N- to C-terminus: DEAD-box ATP-dependent RNA helicase 22 (577 aa).

Residues 82–110 carry the Q motif motif; sequence TSWESLGVSDRLASALHGAGLARPSLVQA. The Helicase ATP-binding domain occupies 113–375; the sequence is IPHVLTTNDV…GGVLKRMFPN (263 aa). Residue 126–133 coordinates ATP; the sequence is AETGSGKT. The DEAD box signature appears at 249–252; sequence DEAD. The tract at residues 288-317 is disordered; it reads SLGDTNEYREDSDSQSAELSADDEENEDGL. Positions 407–568 constitute a Helicase C-terminal domain; sequence LLDAVKYGLK…SFRNKLKKQA (162 aa).

It belongs to the DEAD box helicase family.

It carries out the reaction ATP + H2O = ADP + phosphate + H(+). The chain is DEAD-box ATP-dependent RNA helicase 22 from Oryza sativa subsp. japonica (Rice).